The sequence spans 99 residues: MVKAPKGWRHRTRHIYRKRVREKGAVPPLSLVLIDYKPGDKVIIDPNPAIWSGLPHRRFCGKVGEVVGKRGKAYLVKVRDGDVYKTIIVRPEHLRPFKQ.

It belongs to the eukaryotic ribosomal protein eL21 family.

The protein is Large ribosomal subunit protein eL21 of Ignicoccus hospitalis (strain KIN4/I / DSM 18386 / JCM 14125).